The chain runs to 333 residues: Extracellular globin (333 aa).

An N-terminal signal peptide occupies residues 1-18 (MHSSIVLAIVLFVAIASA). Globin domains lie at 25–167 (CMKS…HHGR) and 174–318 (CMNS…KHAK). Heme b-binding residues include Q82 and H114. N216 is a glycosylation site (N-linked (GlcNAc...) asparagine). Q231 and H263 together coordinate heme b. The segment at 314 to 333 (DKHAKAEKDHHEGEHKEEHH) is disordered.

This sequence belongs to the globin family. Homooctamer.

Its subcellular location is the secreted. The protein localises to the extracellular space. This Pseudoterranova decipiens (Sealworm) protein is Extracellular globin.